We begin with the raw amino-acid sequence, 245 residues long: Ribonuclease P protein component 3 (245 aa).

Belongs to the eukaryotic/archaeal RNase P protein component 3 family. In terms of assembly, consists of a catalytic RNA component and at least 4-5 protein subunits.

It is found in the cytoplasm. It carries out the reaction Endonucleolytic cleavage of RNA, removing 5'-extranucleotides from tRNA precursor.. In terms of biological role, part of ribonuclease P, a protein complex that generates mature tRNA molecules by cleaving their 5'-ends. The polypeptide is Ribonuclease P protein component 3 (Methanothermobacter thermautotrophicus (strain ATCC 29096 / DSM 1053 / JCM 10044 / NBRC 100330 / Delta H) (Methanobacterium thermoautotrophicum)).